Consider the following 304-residue polypeptide: Homoserine O-acetyltransferase (304 aa).

The active-site Acyl-thioester intermediate is the C142. Substrate contacts are provided by K163 and S191. The Proton acceptor role is filled by H234. E236 is an active-site residue. R248 contacts substrate.

It belongs to the MetA family.

The protein localises to the cytoplasm. The enzyme catalyses L-homoserine + acetyl-CoA = O-acetyl-L-homoserine + CoA. Its pathway is amino-acid biosynthesis; L-methionine biosynthesis via de novo pathway; O-acetyl-L-homoserine from L-homoserine: step 1/1. Transfers an acetyl group from acetyl-CoA to L-homoserine, forming acetyl-L-homoserine. This is Homoserine O-acetyltransferase from Thermotoga neapolitana (strain ATCC 49049 / DSM 4359 / NBRC 107923 / NS-E).